A 39-amino-acid polypeptide reads, in one-letter code: Adipokinetic prohormone type 2 (39 aa).

A Pyrrolidone carboxylic acid modification is found at Q1. The residue at position 8 (W8) is a Tryptophan amide.

The protein belongs to the AKH/HRTH/RPCH family. Adipokinetic hormone precursor-related peptide (APRP) can form three type of disulfide-bond dimers: p1 (alpha-alpha), p2 (alpha-beta), and p3 (beta-beta).

The protein resides in the secreted. In terms of biological role, this hormone, released from cells in the corpora cardiaca, causes release of diglycerides from the fat body and stimulation of muscles to use these diglycerides as an energy source during energy-demanding processes. This is Adipokinetic prohormone type 2 from Schistocerca gregaria (Desert locust).